The sequence spans 332 residues: Large ribosomal subunit protein mL44 (332 aa).

The transit peptide at 1 to 30 directs the protein to the mitochondrion; sequence MASGLVRLLQQGHRCLLAPVAPKLVPPVRG. The RNase III domain maps to 86 to 228; sequence DLLKTAFVNS…LITQMTGKEL (143 aa). Positions 236–306 constitute a DRBM domain; that stretch reads NPMGLLVEEL…ARVALRKLYG (71 aa).

It belongs to the ribonuclease III family. Mitochondrion-specific ribosomal protein mL44 subfamily. Component of the mitochondrial large ribosomal subunit (mt-LSU). Mature mammalian 55S mitochondrial ribosomes consist of a small (28S) and a large (39S) subunit. The 28S small subunit contains a 12S ribosomal RNA (12S mt-rRNA) and 30 different proteins. The 39S large subunit contains a 16S rRNA (16S mt-rRNA), a copy of mitochondrial valine transfer RNA (mt-tRNA(Val)), which plays an integral structural role, and 52 different proteins.

It localises to the mitochondrion. Its function is as follows. Component of the 39S subunit of mitochondrial ribosome. May have a function in the assembly/stability of nascent mitochondrial polypeptides exiting the ribosome. This is Large ribosomal subunit protein mL44 (MRPL44) from Homo sapiens (Human).